Reading from the N-terminus, the 433-residue chain is Glutamate-1-semialdehyde 2,1-aminomutase (433 aa).

Lys269 carries the post-translational modification N6-(pyridoxal phosphate)lysine.

The protein belongs to the class-III pyridoxal-phosphate-dependent aminotransferase family. HemL subfamily. As to quaternary structure, homodimer. Pyridoxal 5'-phosphate serves as cofactor.

It is found in the cytoplasm. It carries out the reaction (S)-4-amino-5-oxopentanoate = 5-aminolevulinate. Its pathway is porphyrin-containing compound metabolism; protoporphyrin-IX biosynthesis; 5-aminolevulinate from L-glutamyl-tRNA(Glu): step 2/2. The polypeptide is Glutamate-1-semialdehyde 2,1-aminomutase (Renibacterium salmoninarum (strain ATCC 33209 / DSM 20767 / JCM 11484 / NBRC 15589 / NCIMB 2235)).